Here is a 325-residue protein sequence, read N- to C-terminus: Retinal homeobox protein Rx-B (325 aa).

Positions 32–39 match the Octapeptide motif motif; that stretch reads HSIEAILG. The span at 75 to 87 shows a compositional bias: basic and acidic residues; it reads TEEIHPQQEHLED. A disordered region spans residues 75 to 136; that stretch reads TEEIHPQQEH…KKKHRRNRTT (62 aa). The segment covering 99 to 117 has biased composition (polar residues); it reads AKTSSECLSPGLSTSNSDN. The homeobox DNA-binding region spans 130–189; sequence HRRNRTTFTTYQLHELERAFEKSHYPDVYSREELAMKVNLPEVRVQVWFQNRRAKWRRQE. The short motif at 302–315 is the OAR element; that stretch reads NSIASLRMKAKEHI. Positions 308-312 match the Nuclear localization signal motif; that stretch reads RMKAK.

It belongs to the paired homeobox family. Bicoid subfamily. Highly expressed in anterior neural plate followed by neural retina, pigmented epithelium, in pineal gland, diencephalon floor and epiphysis. At later stages, the neuroretina remains the primary site of expression. No expression in the developing lens and cornea.

It is found in the nucleus. Its function is as follows. Plays a critical role in eye formation by regulating the initial specification of retinal cells and/or their subsequent proliferation. This Xenopus laevis (African clawed frog) protein is Retinal homeobox protein Rx-B (rax-b).